Here is a 441-residue protein sequence, read N- to C-terminus: Histidinol dehydrogenase (441 aa).

NAD(+) contacts are provided by Y136, Q197, and N220. Substrate is bound by residues S243, Q265, and H268. Zn(2+) contacts are provided by Q265 and H268. Active-site proton acceptor residues include E333 and H334. The substrate site is built by H334, D367, E421, and H426. D367 contributes to the Zn(2+) binding site. A Zn(2+)-binding site is contributed by H426.

The protein belongs to the histidinol dehydrogenase family. It depends on Zn(2+) as a cofactor.

It catalyses the reaction L-histidinol + 2 NAD(+) + H2O = L-histidine + 2 NADH + 3 H(+). Its pathway is amino-acid biosynthesis; L-histidine biosynthesis; L-histidine from 5-phospho-alpha-D-ribose 1-diphosphate: step 9/9. In terms of biological role, catalyzes the sequential NAD-dependent oxidations of L-histidinol to L-histidinaldehyde and then to L-histidine. This Pseudomonas putida (strain ATCC 47054 / DSM 6125 / CFBP 8728 / NCIMB 11950 / KT2440) protein is Histidinol dehydrogenase.